The sequence spans 464 residues: ATP synthase subunit beta (464 aa).

152–159 (GGAGVGKT) provides a ligand contact to ATP.

It belongs to the ATPase alpha/beta chains family. F-type ATPases have 2 components, CF(1) - the catalytic core - and CF(0) - the membrane proton channel. CF(1) has five subunits: alpha(3), beta(3), gamma(1), delta(1), epsilon(1). CF(0) has three main subunits: a(1), b(2) and c(9-12). The alpha and beta chains form an alternating ring which encloses part of the gamma chain. CF(1) is attached to CF(0) by a central stalk formed by the gamma and epsilon chains, while a peripheral stalk is formed by the delta and b chains.

The protein localises to the cell membrane. The catalysed reaction is ATP + H2O + 4 H(+)(in) = ADP + phosphate + 5 H(+)(out). In terms of biological role, produces ATP from ADP in the presence of a proton gradient across the membrane. The catalytic sites are hosted primarily by the beta subunits. The chain is ATP synthase subunit beta from Clostridioides difficile (strain 630) (Peptoclostridium difficile).